Reading from the N-terminus, the 387-residue chain is 1-deoxy-D-xylulose 5-phosphate reductoisomerase (387 aa).

Residues T11, G12, S13, I14, G37, R39, and N123 each contribute to the NADPH site. Residue K124 coordinates 1-deoxy-D-xylulose 5-phosphate. E125 is a binding site for NADPH. D147 is a binding site for Mn(2+). S148, E149, S173, and H196 together coordinate 1-deoxy-D-xylulose 5-phosphate. E149 is a Mn(2+) binding site. Residue G202 participates in NADPH binding. The 1-deoxy-D-xylulose 5-phosphate site is built by S209, N214, K215, and E218. E218 serves as a coordination point for Mn(2+).

It belongs to the DXR family. Mg(2+) is required as a cofactor. Mn(2+) serves as cofactor.

The catalysed reaction is 2-C-methyl-D-erythritol 4-phosphate + NADP(+) = 1-deoxy-D-xylulose 5-phosphate + NADPH + H(+). Its pathway is isoprenoid biosynthesis; isopentenyl diphosphate biosynthesis via DXP pathway; isopentenyl diphosphate from 1-deoxy-D-xylulose 5-phosphate: step 1/6. Functionally, catalyzes the NADPH-dependent rearrangement and reduction of 1-deoxy-D-xylulose-5-phosphate (DXP) to 2-C-methyl-D-erythritol 4-phosphate (MEP). In Corynebacterium diphtheriae (strain ATCC 700971 / NCTC 13129 / Biotype gravis), this protein is 1-deoxy-D-xylulose 5-phosphate reductoisomerase.